The chain runs to 228 residues: MGSLLQGFTKSLAMTFLSEIGDKTFFAAAILAMRYPRRLVLAGCLSALIVMTILSATLGWAAPNLISRKWTHHITTFLFFGFGLWSLWDGFKEGGGSEELAEVEAELDSDLKKTNDQSKNSKIEDEQKKQKRPFLTAFFSPIFLKAFSINFFGEWGDKSQLATIGLAADENPLGVVLGGIVAQTLCTTAAVLGGKSLASQISERIVALSGGMLFIIFGIQSLLTPVDA.

Gly2 is modified (N-acetylglycine). 6 helical membrane-spanning segments follow: residues 12–32, 39–59, 71–91, 133–153, 173–193, and 205–225; these read LAMT…AILA, LVLA…ATLG, THHI…WDGF, PFLT…NFFG, LGVV…AVLG, and IVAL…LLTP.

The protein belongs to the GDT1 family.

It is found in the membrane. The sequence is that of GDT1-like protein 5 from Arabidopsis thaliana (Mouse-ear cress).